The primary structure comprises 204 residues: Partner of Y14 and mago (204 aa).

Disordered stretches follow at residues 1-121 (MGSR…QSVN) and 133-153 (SSNNDVCGGAPNPGTTGEDVE). The span at 7-36 (EQGKRMAELSKNLKEGERILEPTRRPDGTL) shows a compositional bias: basic and acidic residues. A compositionally biased stretch (polar residues) spans 104–121 (KANSSEDGSASNGSQSVN). The Nuclear export signal signature appears at 195-200 (ELKALE).

It belongs to the pym family. As to quaternary structure, interacts with MAGO and Y14. In terms of tissue distribution, expressed in root and shoot meristems, cotyledons, vascular tissues of leaves, receptacle of flowers and siliques, and pollen grains.

The protein localises to the cytoplasm. The protein resides in the nucleus. Its subcellular location is the nucleolus. It localises to the nucleoplasm. Functionally, key regulator of the exon junction complex (EJC), a multiprotein complex that associates immediately upstream of the exon-exon junction on mRNAs and serves as a positional landmark for the intron exon structure of genes and directs post-transcriptional processes in the cytoplasm such as mRNA export, nonsense-mediated mRNA decay (NMD) or translation. Acts as an EJC disassembly factor, allowing translation-dependent EJC removal and recycling by disrupting mature EJC from spliced mRNAs. Can increase in vitro the expression from reporter constructs that contain leader introns required for the expression of different genes. In association with MAGO and PYM, participates in intron-mediated enhancement of gene expression. The chain is Partner of Y14 and mago from Arabidopsis thaliana (Mouse-ear cress).